The following is a 152-amino-acid chain: Transcriptional regulator MraZ (152 aa).

2 consecutive SpoVT-AbrB domains span residues 5–52 (ATLV…TLPE) and 81–124 (ASEC…DETT).

The protein belongs to the MraZ family. Forms oligomers.

Its subcellular location is the cytoplasm. The protein resides in the nucleoid. Negatively regulates its own expression and that of the subsequent genes in the proximal part of the division and cell wall (dcw) gene cluster. Acts by binding directly to DNA. May also regulate the expression of genes outside the dcw cluster. In Enterobacter sp. (strain 638), this protein is Transcriptional regulator MraZ.